Consider the following 228-residue polypeptide: Lipoprotein-releasing system ATP-binding protein LolD (228 aa).

An ABC transporter domain is found at leucine 9–arginine 228. Glycine 44–serine 51 is a binding site for ATP.

The protein belongs to the ABC transporter superfamily. Lipoprotein translocase (TC 3.A.1.125) family. The complex is composed of two ATP-binding proteins (LolD) and two transmembrane proteins (LolC and LolE).

It is found in the cell inner membrane. Part of the ABC transporter complex LolCDE involved in the translocation of mature outer membrane-directed lipoproteins, from the inner membrane to the periplasmic chaperone, LolA. Responsible for the formation of the LolA-lipoprotein complex in an ATP-dependent manner. The sequence is that of Lipoprotein-releasing system ATP-binding protein LolD from Protochlamydia amoebophila (strain UWE25).